The chain runs to 211 residues: UPF0637 protein Bsph_1379 (211 aa).

The protein belongs to the UPF0637 family.

The protein is UPF0637 protein Bsph_1379 of Lysinibacillus sphaericus (strain C3-41).